Reading from the N-terminus, the 928-residue chain is Isoleucine--tRNA ligase (928 aa).

Residues 57 to 67 (PFANGNIHMGH) carry the 'HIGH' region motif. L-isoleucyl-5'-AMP is bound at residue E554. Residues 595–599 (KMSKS) carry the 'KMSKS' region motif. K598 contributes to the ATP binding site. C887, C890, C907, and C910 together coordinate Zn(2+).

This sequence belongs to the class-I aminoacyl-tRNA synthetase family. IleS type 1 subfamily. Monomer. It depends on Zn(2+) as a cofactor.

The protein resides in the cytoplasm. It carries out the reaction tRNA(Ile) + L-isoleucine + ATP = L-isoleucyl-tRNA(Ile) + AMP + diphosphate. Catalyzes the attachment of isoleucine to tRNA(Ile). As IleRS can inadvertently accommodate and process structurally similar amino acids such as valine, to avoid such errors it has two additional distinct tRNA(Ile)-dependent editing activities. One activity is designated as 'pretransfer' editing and involves the hydrolysis of activated Val-AMP. The other activity is designated 'posttransfer' editing and involves deacylation of mischarged Val-tRNA(Ile). In Lactobacillus johnsonii (strain CNCM I-12250 / La1 / NCC 533), this protein is Isoleucine--tRNA ligase.